Reading from the N-terminus, the 503-residue chain is 3-octaprenyl-4-hydroxybenzoate carboxy-lyase (503 aa).

Asn176 contacts Mn(2+). Residues 179-181 (IYR), 193-195 (RWL), and 198-199 (RG) each bind prenylated FMN. Glu242 provides a ligand contact to Mn(2+). Asp303 acts as the Proton donor in catalysis.

The protein belongs to the UbiD family. Homohexamer. It depends on prenylated FMN as a cofactor. Mn(2+) serves as cofactor.

It localises to the cell membrane. It catalyses the reaction a 4-hydroxy-3-(all-trans-polyprenyl)benzoate + H(+) = a 2-(all-trans-polyprenyl)phenol + CO2. It functions in the pathway cofactor biosynthesis; ubiquinone biosynthesis. Catalyzes the decarboxylation of 3-octaprenyl-4-hydroxy benzoate to 2-octaprenylphenol, an intermediate step in ubiquinone biosynthesis. The chain is 3-octaprenyl-4-hydroxybenzoate carboxy-lyase from Ralstonia pickettii (strain 12J).